The chain runs to 279 residues: Type III pantothenate kinase (279 aa).

6–13 (DIGNTLSK) contacts ATP. Substrate-binding positions include Tyr-92 and 99 to 102 (GVDR). Residue Asp-101 is the Proton acceptor of the active site. Asp-120 provides a ligand contact to K(+). An ATP-binding site is contributed by Ser-123. A substrate-binding site is contributed by Thr-177.

The protein belongs to the type III pantothenate kinase family. Homodimer. NH4(+) is required as a cofactor. Requires K(+) as cofactor.

Its subcellular location is the cytoplasm. The catalysed reaction is (R)-pantothenate + ATP = (R)-4'-phosphopantothenate + ADP + H(+). The protein operates within cofactor biosynthesis; coenzyme A biosynthesis; CoA from (R)-pantothenate: step 1/5. Its function is as follows. Catalyzes the phosphorylation of pantothenate (Pan), the first step in CoA biosynthesis. The protein is Type III pantothenate kinase of Chromohalobacter salexigens (strain ATCC BAA-138 / DSM 3043 / CIP 106854 / NCIMB 13768 / 1H11).